The chain runs to 303 residues: Methionyl-tRNA formyltransferase (303 aa).

Position 108 to 111 (108 to 111) interacts with (6S)-5,6,7,8-tetrahydrofolate; it reads SDLP.

This sequence belongs to the Fmt family.

It catalyses the reaction L-methionyl-tRNA(fMet) + (6R)-10-formyltetrahydrofolate = N-formyl-L-methionyl-tRNA(fMet) + (6S)-5,6,7,8-tetrahydrofolate + H(+). Its function is as follows. Attaches a formyl group to the free amino group of methionyl-tRNA(fMet). The formyl group appears to play a dual role in the initiator identity of N-formylmethionyl-tRNA by promoting its recognition by IF2 and preventing the misappropriation of this tRNA by the elongation apparatus. The protein is Methionyl-tRNA formyltransferase of Rickettsia felis (strain ATCC VR-1525 / URRWXCal2) (Rickettsia azadi).